Consider the following 554-residue polypeptide: NADH-quinone oxidoreductase subunit N 3 (554 aa).

14 helical membrane passes run 35–55 (LMPVLIIVVAAVLGILVEAFV), 65–85 (LFLTVVAVAGSFAAIVGLAAG), 105–125 (PTLFLQGTILLVAMVALFTFA), 161–181 (GFTTTEVFPLLLFSVAGLLVF), 187–207 (LLTLFIALEVFSLPLYLLCAV), 222–242 (YFLLGAFSSAFLLFGIALLYG), 275–295 (ALLLIGGAMILTGLLFKVGAV), 322–342 (VAAFGALLRLLYVALPGLAWD), 345–365 (PVMWAVAIVTMLGGAIVAITQ), 371–391 (LLAYSSIAHAGFILAGVIAAS), 398–418 (VLFYLLAYSFVTVGAFAVVTL), 442–462 (VAAVFAVFLLAFAGIPLTSGF), 476–496 (GAGALVVVGVLSSAVAAFFYI), and 525–545 (IAVGVAVTLVLGLAPQYFLDL).

The protein belongs to the complex I subunit 2 family. NDH-1 is composed of 14 different subunits. Subunits NuoA, H, J, K, L, M, N constitute the membrane sector of the complex.

Its subcellular location is the cell membrane. The enzyme catalyses a quinone + NADH + 5 H(+)(in) = a quinol + NAD(+) + 4 H(+)(out). In terms of biological role, NDH-1 shuttles electrons from NADH, via FMN and iron-sulfur (Fe-S) centers, to quinones in the respiratory chain. The immediate electron acceptor for the enzyme in this species is believed to be a menaquinone. Couples the redox reaction to proton translocation (for every two electrons transferred, four hydrogen ions are translocated across the cytoplasmic membrane), and thus conserves the redox energy in a proton gradient. The chain is NADH-quinone oxidoreductase subunit N 3 from Streptomyces griseus subsp. griseus (strain JCM 4626 / CBS 651.72 / NBRC 13350 / KCC S-0626 / ISP 5235).